We begin with the raw amino-acid sequence, 426 residues long: Putative competence-damage inducible protein (426 aa).

The protein belongs to the CinA family.

This chain is Putative competence-damage inducible protein, found in Symbiobacterium thermophilum (strain DSM 24528 / JCM 14929 / IAM 14863 / T).